A 614-amino-acid polypeptide reads, in one-letter code: Dihydroxy-acid dehydratase (614 aa).

Residue Asp-81 participates in Mg(2+) binding. Cys-122 lines the [2Fe-2S] cluster pocket. 2 residues coordinate Mg(2+): Asp-123 and Lys-124. Lys-124 bears the N6-carboxylysine mark. Residue Cys-193 participates in [2Fe-2S] cluster binding. Glu-489 contacts Mg(2+). The Proton acceptor role is filled by Ser-515.

The protein belongs to the IlvD/Edd family. As to quaternary structure, homodimer. It depends on [2Fe-2S] cluster as a cofactor. The cofactor is Mg(2+).

It carries out the reaction (2R)-2,3-dihydroxy-3-methylbutanoate = 3-methyl-2-oxobutanoate + H2O. It catalyses the reaction (2R,3R)-2,3-dihydroxy-3-methylpentanoate = (S)-3-methyl-2-oxopentanoate + H2O. Its pathway is amino-acid biosynthesis; L-isoleucine biosynthesis; L-isoleucine from 2-oxobutanoate: step 3/4. It participates in amino-acid biosynthesis; L-valine biosynthesis; L-valine from pyruvate: step 3/4. Functions in the biosynthesis of branched-chain amino acids. Catalyzes the dehydration of (2R,3R)-2,3-dihydroxy-3-methylpentanoate (2,3-dihydroxy-3-methylvalerate) into 2-oxo-3-methylpentanoate (2-oxo-3-methylvalerate) and of (2R)-2,3-dihydroxy-3-methylbutanoate (2,3-dihydroxyisovalerate) into 2-oxo-3-methylbutanoate (2-oxoisovalerate), the penultimate precursor to L-isoleucine and L-valine, respectively. This is Dihydroxy-acid dehydratase from Saccharophagus degradans (strain 2-40 / ATCC 43961 / DSM 17024).